We begin with the raw amino-acid sequence, 196 residues long: Thymidine kinase (196 aa).

Residue 17–24 (GPMFAGKT) coordinates ATP. Glu92 functions as the Proton acceptor in the catalytic mechanism. Phe121 is a substrate binding site. Zn(2+) is bound by residues Cys146 and Cys149. Residue 166–170 (LILAG) participates in substrate binding. Zn(2+) is bound by residues Cys179 and Cys182.

It belongs to the thymidine kinase family.

The enzyme catalyses thymidine + ATP = dTMP + ADP + H(+). In terms of biological role, phosphorylates thymidine. ASFV replicates in the cytoplasm of infected cells and contains genes encoding a number of enzymes needed for DNA synthesis, including thymidine kinase. Important for growth in swine macrophages in vitro and is a virus virulence factor in swine. In Ornithodoros (relapsing fever ticks), this protein is Thymidine kinase.